We begin with the raw amino-acid sequence, 627 residues long: Zinc cluster transcription factor acuM (627 aa).

Disordered stretches follow at residues 1 to 40, 129 to 148, 155 to 193, 225 to 258, 277 to 305, and 394 to 416; these read MGCR…PARP, NGTA…GTME, AEGD…RRKV, CHDE…FSNA, PDGT…QNSL, and AQPS…PSST. Residues 162-171 show a composition bias toward polar residues; it reads MESGSKNTAS. Residues 197 to 225 constitute a DNA-binding region (zn(2)-C6 fungal-type); the sequence is CVYCRRSHMTCDSERPCTRCIKRNIGHLC. Over residues 225-251 the composition is skewed to basic and acidic residues; the sequence is CHDEPREPSKRARSEHEHSTAEEDGHS. The span at 286-305 shows a compositional bias: polar residues; it reads SSVSAVQHNTIPSSSAQNSL. Residues 394–403 are compositionally biased toward low complexity; it reads AQPSQPTQSQ. The segment covering 404–416 has biased composition (polar residues); it reads PHQNDSVQGPSST.

The protein resides in the nucleus. In terms of biological role, transcription factor that governs genes involved in reductive and siderophore-mediated iron acquisition, and carbon metabolism. Suppresses the expression of sreA and induces hapX to stimulate expression of genes involved in both reductive iron assimilation and siderophore-mediated iron uptake which is essential for the maximal virulence. Also regulates genes involved in gluconeogenesis. This is Zinc cluster transcription factor acuM from Aspergillus fumigatus (strain ATCC MYA-4609 / CBS 101355 / FGSC A1100 / Af293) (Neosartorya fumigata).